Reading from the N-terminus, the 291-residue chain is Foldase protein PrsA 2 (291 aa).

The N-terminal stretch at 1-20 is a signal peptide; that stretch reads MKKKLILGLVMMMALFSLAA. Cysteine 21 carries the N-palmitoyl cysteine lipid modification. Cysteine 21 carries S-diacylglycerol cysteine lipidation. Positions 135–226 constitute a PpiC domain; that stretch reads QPDITVSHIL…YGYHIIQMDK (92 aa).

Belongs to the PrsA family.

It is found in the cell membrane. It catalyses the reaction [protein]-peptidylproline (omega=180) = [protein]-peptidylproline (omega=0). Its function is as follows. Plays a major role in protein secretion by helping the post-translocational extracellular folding of several secreted proteins. In Listeria innocua serovar 6a (strain ATCC BAA-680 / CLIP 11262), this protein is Foldase protein PrsA 2 (prsA2).